We begin with the raw amino-acid sequence, 324 residues long: Tubulin alpha-8 chain (324 aa).

The GTP site is built by Ser15, Gly19, Thr20, Thr54, Asn81, and Asn103. The active site involves Glu129.

This sequence belongs to the tubulin family. Dimer of alpha and beta chains. A typical microtubule is a hollow water-filled tube with an outer diameter of 25 nm and an inner diameter of 15 nM. Alpha-beta heterodimers associate head-to-tail to form protofilaments running lengthwise along the microtubule wall with the beta-tubulin subunit facing the microtubule plus end conferring a structural polarity. Microtubules usually have 13 protofilaments but different protofilament numbers can be found in some organisms and specialized cells. The cofactor is Mg(2+). In terms of processing, some glutamate residues at the C-terminus are polyglycylated, resulting in polyglycine chains on the gamma-carboxyl group. Glycylation is mainly limited to tubulin incorporated into axonemes (cilia and flagella) whereas glutamylation is prevalent in neuronal cells, centrioles, axonemes, and the mitotic spindle. Both modifications can coexist on the same protein on adjacent residues, and lowering polyglycylation levels increases polyglutamylation, and reciprocally. The precise function of polyglycylation is still unclear. Some glutamate residues at the C-terminus are polyglutamylated, resulting in polyglutamate chains on the gamma-carboxyl group. Polyglutamylation plays a key role in microtubule severing by spastin (SPAST). SPAST preferentially recognizes and acts on microtubules decorated with short polyglutamate tails: severing activity by SPAST increases as the number of glutamates per tubulin rises from one to eight, but decreases beyond this glutamylation threshold.

The protein resides in the cytoplasm. It is found in the cytoskeleton. It carries out the reaction GTP + H2O = GDP + phosphate + H(+). Its function is as follows. Tubulin is the major constituent of microtubules, a cylinder consisting of laterally associated linear protofilaments composed of alpha- and beta-tubulin heterodimers. Microtubules grow by the addition of GTP-tubulin dimers to the microtubule end, where a stabilizing cap forms. Below the cap, tubulin dimers are in GDP-bound state, owing to GTPase activity of alpha-tubulin. This is Tubulin alpha-8 chain from Gallus gallus (Chicken).